A 211-amino-acid chain; its full sequence is ATP phosphoribosyltransferase (211 aa).

It belongs to the ATP phosphoribosyltransferase family. Short subfamily. Heteromultimer composed of HisG and HisZ subunits.

Its subcellular location is the cytoplasm. The catalysed reaction is 1-(5-phospho-beta-D-ribosyl)-ATP + diphosphate = 5-phospho-alpha-D-ribose 1-diphosphate + ATP. The protein operates within amino-acid biosynthesis; L-histidine biosynthesis; L-histidine from 5-phospho-alpha-D-ribose 1-diphosphate: step 1/9. In terms of biological role, catalyzes the condensation of ATP and 5-phosphoribose 1-diphosphate to form N'-(5'-phosphoribosyl)-ATP (PR-ATP). Has a crucial role in the pathway because the rate of histidine biosynthesis seems to be controlled primarily by regulation of HisG enzymatic activity. This is ATP phosphoribosyltransferase from Thermosynechococcus vestitus (strain NIES-2133 / IAM M-273 / BP-1).